We begin with the raw amino-acid sequence, 249 residues long: UPF0696 protein C11orf68 homolog (249 aa).

Belongs to the UPF0696 family.

The polypeptide is UPF0696 protein C11orf68 homolog (Danio rerio (Zebrafish)).